Reading from the N-terminus, the 780-residue chain is Striatin (780 aa).

A coiled-coil region spans residues 53 to 120 (LHFLQHEWAR…QERAKYHKLK (68 aa)). The segment at 55–63 (FLQHEWARF) is caveolin-binding. Residues 124–150 (ELNQGDMKPPSYDSDEGNETEVQPQQN) are disordered. Residue S137 is modified to Phosphoserine. Residues 149 to 166 (QNSQLMWKQGRQLLRQYL) are calmodulin-binding. T225 carries the phosphothreonine modification. Residues S227, S229, S245, and S259 each carry the phosphoserine modification. 2 disordered regions span residues 289–310 (DFLV…GTDW) and 365–387 (DELP…RLPE). Residues 299 to 310 (NESRSAGDGTDW) are compositionally biased toward basic and acidic residues. 6 WD repeats span residues 461 to 500 (SHFD…PAKK), 514 to 553 (AHKG…IDPY), 567 to 606 (GHTD…PALS), 662 to 701 (NSSC…LIHS), 704 to 743 (AHLE…CIQE), and 750 to 780 (KFEE…KVFV).

This sequence belongs to the WD repeat striatin family. In terms of assembly, part of the core of STRIPAK complexes composed of PP2A catalytic and scaffolding subunits, the striatins (PP2A regulatory subunits), the striatin-associated proteins MOB4, STRIP1 and STRIP2, PDCD10 and members of the STE20 kinases, such as STK24 and STK26. Interacts with CTTNBP2; this interaction may regulate dendritic spine distribution of STRN. Activation of glutamate receptors weakens the interaction with CTTNBP2. As to expression, preferentially expressed in brain.

It is found in the cytoplasm. The protein localises to the membrane. The protein resides in the cell projection. It localises to the dendritic spine. Calmodulin-binding scaffolding protein which is the center of the striatin-interacting phosphatase and kinase (STRIPAK) complexes. STRIPAK complexes have critical roles in protein (de)phosphorylation and are regulators of multiple signaling pathways including Hippo, MAPK, nuclear receptor and cytoskeleton remodeling. Different types of STRIPAK complexes are involved in a variety of biological processes such as cell growth, differentiation, apoptosis, metabolism and immune regulation. The protein is Striatin (STRN) of Homo sapiens (Human).